Reading from the N-terminus, the 114-residue chain is Putative small ubiquitin-related modifier 4 (114 aa).

The interval 1 to 20 is disordered; it reads MSTTSRVGSNEVKMEGQKRK. The region spanning 26–104 is the Ubiquitin-like domain; it reads THVTLKVKGQ…IDAMLCQQSG (79 aa). Residue glycine 104 forms a Glycyl lysine isopeptide (Gly-Lys) (interchain with K-? in acceptor proteins) linkage.

Belongs to the ubiquitin family. SUMO subfamily. As to quaternary structure, interacts with SAE2, SCE1, SIZ1 and MMS21 Covalently attached to a number of proteins.

It localises to the nucleus. Its subcellular location is the cytoplasm. Functionally, ubiquitin-like protein which can be covalently attached to target lysines as a monomer. Does not seem to be involved in protein degradation and may function as an antagonist of ubiquitin in the degradation process. This chain is Putative small ubiquitin-related modifier 4 (SUMO4), found in Arabidopsis thaliana (Mouse-ear cress).